A 21-amino-acid polypeptide reads, in one-letter code: M-lycotoxin-Ls4a (21 aa).

Leucine 21 is modified (leucine amide).

Expressed by the venom gland.

It localises to the secreted. In terms of biological role, may inhibit growth of bacteria. The protein is M-lycotoxin-Ls4a of Lycosa singoriensis (Wolf spider).